Here is a 64-residue protein sequence, read N- to C-terminus: Large ribosomal subunit protein eL37 (64 aa).

Zn(2+) contacts are provided by Cys-20, Cys-23, Cys-35, and Cys-38. The C4-type zinc finger occupies 20–38 (CRRCGRRAFHVRKKVCAAC).

This sequence belongs to the eukaryotic ribosomal protein eL37 family. Zn(2+) serves as cofactor.

Binds to the 23S rRNA. The chain is Large ribosomal subunit protein eL37 from Methanococcus maripaludis (strain C6 / ATCC BAA-1332).